A 244-amino-acid polypeptide reads, in one-letter code: Glutathione S-transferase theta-2 (244 aa).

Positions 2 to 82 constitute a GST N-terminal domain; it reads GLELYLDLLS…YLSSKYQVAD (81 aa). Residues 40–41, 53–54, 66–67, and 104–107 each bind glutathione; these read HM, KV, ES, and DNIR. Positions 88 to 230 constitute a GST C-terminal domain; that stretch reads DLQARAQVHE…AKKMLPVPPP (143 aa).

This sequence belongs to the GST superfamily. Theta family. As to quaternary structure, homodimer. As to expression, in liver, highest expression found in central vein limiting plate hepatocytes. Also expressed in interlobular bile duct epithelial cells. In lung, expressed in club cells and ciliated cells of the bronchiolar epithelium and in type II alveolar cells of the lung parenchyma.

The protein resides in the cytoplasm. It localises to the cytosol. Its subcellular location is the nucleus. The enzyme catalyses RX + glutathione = an S-substituted glutathione + a halide anion + H(+). Its function is as follows. Conjugation of reduced glutathione to a wide number of exogenous and endogenous hydrophobic electrophiles. This is Glutathione S-transferase theta-2 from Mus musculus (Mouse).